The primary structure comprises 429 residues: GTPase Obg (429 aa).

One can recognise an Obg domain in the interval 1–158 (MFVDHVKIYV…LNVILELKVL (158 aa)). The disordered stretch occupies residues 119–143 (AGRGGRGNSRFATPANPAPELSEKG). In terms of domain architecture, OBG-type G spans 159-329 (ADVGLVGFPS…LLFAIADLLE (171 aa)). GTP is bound by residues 165 to 172 (GFPSVGKS), 190 to 194 (FTTIV), 212 to 215 (DLPG), 282 to 285 (NKMD), and 310 to 312 (SAV). S172 and T192 together coordinate Mg(2+). The OCT domain maps to 351-429 (KHEAKGEDFE…LQEFEFEFVD (79 aa)).

The protein belongs to the TRAFAC class OBG-HflX-like GTPase superfamily. OBG GTPase family. Monomer. Mg(2+) is required as a cofactor.

It localises to the cytoplasm. Its function is as follows. An essential GTPase which binds GTP, GDP and possibly (p)ppGpp with moderate affinity, with high nucleotide exchange rates and a fairly low GTP hydrolysis rate. Plays a role in control of the cell cycle, stress response, ribosome biogenesis and in those bacteria that undergo differentiation, in morphogenesis control. This chain is GTPase Obg, found in Lysinibacillus sphaericus (strain C3-41).